Consider the following 360-residue polypeptide: Peptide chain release factor 1 (360 aa).

Residue Gln235 is modified to N5-methylglutamine.

This sequence belongs to the prokaryotic/mitochondrial release factor family. Post-translationally, methylated by PrmC. Methylation increases the termination efficiency of RF1.

It is found in the cytoplasm. Functionally, peptide chain release factor 1 directs the termination of translation in response to the peptide chain termination codons UAG and UAA. The polypeptide is Peptide chain release factor 1 (Bordetella pertussis (strain Tohama I / ATCC BAA-589 / NCTC 13251)).